The primary structure comprises 122 residues: Selenoprotein H (122 aa).

An N6-acetyllysine modification is found at K20. The segment at residues 41–44 is a cross-link (cysteinyl-selenocysteine (Cys-Sec); redox-active); the sequence is CTSU. A non-standard amino acid (selenocysteine) is located at residue U44.

The protein belongs to the SelWTH family.

Functionally, may be involved in a redox-related process. The chain is Selenoprotein H from Macaca fascicularis (Crab-eating macaque).